Reading from the N-terminus, the 244-residue chain is Multiple organellar RNA editing factor 3, mitochondrial (244 aa).

A mitochondrion-targeting transit peptide spans 1-62 (MALISTRRTL…GPCYISTRPK (62 aa)). Disordered stretches follow at residues 59–82 (TRPK…SNRP) and 196–244 (YRFT…KPSA). Over residues 60 to 80 (RPKTSGSGYSPLNDPSPNWSN) the composition is skewed to polar residues. Over residues 210-226 (PRYDRRRETMQVERREP) the composition is skewed to basic and acidic residues.

This sequence belongs to the MORF family. In terms of assembly, heterodimer with MORF1. Homodimer and heterodimers with MORF8/RIP1, MORF4/RIP4 and MORF5/RIP5.

Its subcellular location is the mitochondrion. In terms of biological role, involved in organellar RNA editing. Required for the processing of RNA editing sites in mitochondria. The protein is Multiple organellar RNA editing factor 3, mitochondrial of Arabidopsis thaliana (Mouse-ear cress).